A 287-amino-acid polypeptide reads, in one-letter code: MMEKIRLILLSSRPISWVNTAYPFGLAYLLNAGEIDWLFWLGIVFFLIPYNIAMYGINDVFDYESDIRNPRKGGVEGAVLPKSSHSTLLWASAISTIPFLVILFIFGTWMSSLWLTISVLAVIAYSAPKLRFKERPFIDALTSSTHFTSPALIGATITGTSPSAAMWIALGSFFLWGMASQILGAVQDVNADREANLSSIATVIGARGAIRLSVVLYLLAAVLVTTLPNPAWIIGIAILTYVFDAARFWNITDASCEQANRSWKVFLWLNYFVGAVITILLIAIHQI.

7 helical membrane-spanning segments follow: residues 15–35, 37–57, 97–117, 137–157, 166–186, 218–238, and 265–285; these read ISWV…AGEI, WLFW…MYGI, IPFL…WLTI, FIDA…GATI, MWIA…LGAV, LLAA…GIAI, and VFLW…IAIH.

This sequence belongs to the UbiA prenyltransferase family.

Its subcellular location is the cell membrane. The enzyme catalyses all-trans-lycopene + dimethylallyl diphosphate + A + H2O = nonaflavuxanthin + AH2 + diphosphate. It carries out the reaction nonaflavuxanthin + dimethylallyl diphosphate + A + H2O = flavuxanthin + AH2 + diphosphate. It functions in the pathway carotenoid biosynthesis. In terms of biological role, catalyzes the elongation of the C(40) carotenoid all-trans-lycopene to the acyclic C(50) carotenoid flavuxanthin during decaprenoxanthin biosynthesis. Acts as a bifunctional enzyme that catalyzes the elongation of lycopene by attaching a C(5) isoprene unit at C-2, as well as the hydroxylation of the new isoprene unit. The enzyme acts at both ends of the substrate, forming the C(50) carotenoid flavuxanthin via the C(45) intermediate nonaflavuxanthin. The sequence is that of Lycopene elongase/hydratase from Corynebacterium glutamicum (Brevibacterium saccharolyticum).